We begin with the raw amino-acid sequence, 271 residues long: Calretinin (271 aa).

6 EF-hand domains span residues 16–51, 63–98, 107–142, 151–186, 195–230, and 235–270; these read LTAS…LEKA, NFGE…EENF, GSSA…LLKK, KLQE…QENF, LTSE…LYEK, and MNIQ…SEPP. Positions 29, 31, 33, 35, 40, 76, 78, 80, 82, 87, 120, 122, 124, 126, 131, 164, 166, 168, 170, 175, 208, 210, 212, 214, and 219 each coordinate Ca(2+). Tyrosine 214 is modified (phosphotyrosine).

Belongs to the calbindin family. As to expression, widely expressed in central nervous system. Expressed in type I unipolar brush cells of the cerebellum (at protein level).

The protein localises to the synapse. Its subcellular location is the cell projection. It localises to the dendrite. Functionally, calcium-binding protein involved in calcium homeostasis and signal transduction. It plays a critical role in buffering intracellular calcium levels and modulating calcium-dependent signaling pathways. Predominantly expressed in specific neuronal populations, influences synaptic plasticity and neuronal excitability, contributing to learning and memory. During embryonic development, it facilitates neuronal differentiation and maturation. The sequence is that of Calretinin (Calb2) from Mus musculus (Mouse).